The following is a 782-amino-acid chain: LPS-assembly protein LptD (782 aa).

The first 23 residues, 1-23, serve as a signal peptide directing secretion; the sequence is MNKKHTLISLAILTALYSQQSLA.

This sequence belongs to the LptD family. Component of the lipopolysaccharide transport and assembly complex. Interacts with LptE and LptA.

Its subcellular location is the cell outer membrane. Together with LptE, is involved in the assembly of lipopolysaccharide (LPS) at the surface of the outer membrane. This chain is LPS-assembly protein LptD, found in Haemophilus influenzae (strain 86-028NP).